Consider the following 214-residue polypeptide: Large ribosomal subunit protein uL4c (214 aa).

The segment at 43-80 (KQSNEKRQGSANTKTRSEVRGGGRKPWRQKGTGRARAG) is disordered. Basic residues predominate over residues 64-75 (GGRKPWRQKGTG).

This sequence belongs to the universal ribosomal protein uL4 family. Part of the 50S ribosomal subunit.

It localises to the plastid. The protein localises to the chloroplast. Functionally, probably binds the 23S rRNA. The polypeptide is Large ribosomal subunit protein uL4c (rpl4) (Porphyra purpurea (Red seaweed)).